A 425-amino-acid chain; its full sequence is Protein CLP1 homolog (425 aa).

ATP is bound by residues glutamate 18, lysine 59, and 121 to 126 (DVGKST).

It belongs to the Clp1 family. Clp1 subfamily.

It is found in the nucleus. In terms of biological role, required for endonucleolytic cleavage during polyadenylation-dependent pre-mRNA 3'-end formation. This Drosophila ananassae (Fruit fly) protein is Protein CLP1 homolog (cbc).